Here is a 1423-residue protein sequence, read N- to C-terminus: ABC transporter G family member 40 (1423 aa).

Over residues 1-19 the composition is skewed to polar residues; the sequence is MEGTSFHQASNSMRRNSSV. Residues 1 to 36 form a disordered region; the sequence is MEGTSFHQASNSMRRNSSVWKKDSGREIFSRSSREE. N-linked (GlcNAc...) asparagine glycosylation is present at asparagine 16. The segment covering 20-34 has biased composition (basic and acidic residues); sequence WKKDSGREIFSRSSR. Positions 154–427 constitute an ABC transporter 1 domain; the sequence is LNTLHLVPNR…FETMGFKCPP (274 aa). 187-194 contacts ATP; it reads GPPSSGKT. An N-linked (GlcNAc...) asparagine glycan is attached at asparagine 376. The region spanning 505–718 is the ABC transmembrane type-2 1 domain; that stretch reads ELVKTSFSRE…GQNAILANEF (214 aa). 6 consecutive transmembrane segments (helical) span residues 523–543, 562–582, 611–631, 643–663, 667–687, and 696–716; these read FVYY…MTLF, ALFF…SMTI, IPIS…VIGF, ILLV…AALG, IVAN…GGVV, and WWIW…ILAN. Asparagine 729 carries an N-linked (GlcNAc...) asparagine glycan. A helical transmembrane segment spans residues 756-776; that stretch reads GALLGFVVLFNFGFTLALTFL. One can recognise an ABC transporter 2 domain in the interval 825 to 1077; the sequence is ITFDNVVYSV…HLINYFESIQ (253 aa). 870–877 provides a ligand contact to ATP; sequence GVSGAGKT. An N-linked (GlcNAc...) asparagine glycan is attached at asparagine 895. Threonine 962 is modified (phosphothreonine). Positions 1150–1364 constitute an ABC transmembrane type-2 2 domain; that stretch reads TQCMASLWKQ…TLYGLIASQF (215 aa). A run of 6 helical transmembrane segments spans residues 1174–1194, 1207–1227, 1257–1277, 1284–1304, 1314–1334, and 1341–1361; these read FLFT…LGGK, SMYT…QPVV, IPYV…MIGF, FFWY…YGMM, IASV…GFLI, and VWWE…GLIA. N-linked (GlcNAc...) asparagine glycosylation is present at asparagine 1375. The chain crosses the membrane as a helical span at residues 1395 to 1415; sequence VVAAMNVIFPLLFAVIFAIGI.

It belongs to the ABC transporter superfamily. ABCG family. PDR (TC 3.A.1.205) subfamily. As to quaternary structure, interacts with LECRK91 and LECRK92. In terms of tissue distribution, mostly observed in inflorescence meristems relative to cauline leaves and developing siliques. Ubiquitous with higher levels in leaves, stems and flowers. Also present in primary and lateral roots. In seeds, mainly expressed in the embryo and, to a lesser extent, in the endosperm.

It localises to the cell membrane. It carries out the reaction abscisate(out) + ATP + H2O = abscisate(in) + ADP + phosphate + H(+). With respect to regulation, inhibited by glibenclamide, verapamil and vanadate (ABC transporters inhibitors). Functionally, high affinity abscisic acid (ABA) transporter that mediates the import of ABA, with a preference for (+)-ABA, through the plasma membrane, especially in guard cells, and is involved in the intercellular and intracellular ABA signaling pathways leading, for example, to stomatal closure, thus conferring drought tolerance. Together with ABCG30, import into the embryo the ABA delivered from the endosperm via ABCG25 and ABCG31-mediated export to suppress radicle extension and subsequent embryonic growth. May be a general defense protein. Functions as a pump to exclude Pb(2+) ions and/or Pb(2+)-containing toxic compounds from the cytoplasm. Contributes to Pb(2+) ions resistance. Confers some resistance to the terpene sclareol. In terms of biological role, (Microbial infection) Involved in resistance response to the pathogenic oomycetes Phytophthora infestans and Phytophthora capsici. The sequence is that of ABC transporter G family member 40 from Arabidopsis thaliana (Mouse-ear cress).